Consider the following 46-residue polypeptide: Large ribosomal subunit protein bL36 (46 aa).

Belongs to the bacterial ribosomal protein bL36 family.

This chain is Large ribosomal subunit protein bL36, found in Escherichia coli O7:K1 (strain IAI39 / ExPEC).